The following is a 217-amino-acid chain: Somatotropin (217 aa).

A signal peptide spans 1-27; the sequence is MMAAGPRTSLLLAFTLLCLPWTQVVGA. Histidine 46 is a Zn(2+) binding site. Residues cysteine 79 and cysteine 190 are joined by a disulfide bond. Phosphoserine is present on serine 132. Glutamate 199 contributes to the Zn(2+) binding site. Cysteine 207 and cysteine 215 form a disulfide bridge.

This sequence belongs to the somatotropin/prolactin family.

It is found in the secreted. Its function is as follows. Plays an important role in growth control. Its major role in stimulating body growth is to stimulate the liver and other tissues to secrete IGF1. It stimulates both the differentiation and proliferation of myoblasts. It also stimulates amino acid uptake and protein synthesis in muscle and other tissues. In Capra hircus (Goat), this protein is Somatotropin (GH1).